We begin with the raw amino-acid sequence, 712 residues long: Elongation factor G (712 aa).

Positions 8-290 constitute a tr-type G domain; it reads TRYRNIGISA…AVIEFLPSPT (283 aa). GTP-binding positions include 17–24, 88–92, and 142–145; these read AHIDAGKT, DTPGH, and NKMD.

It belongs to the TRAFAC class translation factor GTPase superfamily. Classic translation factor GTPase family. EF-G/EF-2 subfamily.

Its subcellular location is the cytoplasm. Functionally, catalyzes the GTP-dependent ribosomal translocation step during translation elongation. During this step, the ribosome changes from the pre-translocational (PRE) to the post-translocational (POST) state as the newly formed A-site-bound peptidyl-tRNA and P-site-bound deacylated tRNA move to the P and E sites, respectively. Catalyzes the coordinated movement of the two tRNA molecules, the mRNA and conformational changes in the ribosome. The polypeptide is Elongation factor G (Acinetobacter baumannii (strain SDF)).